A 244-amino-acid polypeptide reads, in one-letter code: DNA repair protein RecO (244 aa).

This sequence belongs to the RecO family.

In terms of biological role, involved in DNA repair and RecF pathway recombination. The sequence is that of DNA repair protein RecO from Caldicellulosiruptor bescii (strain ATCC BAA-1888 / DSM 6725 / KCTC 15123 / Z-1320) (Anaerocellum thermophilum).